Reading from the N-terminus, the 448-residue chain is MSIQAIVLATFDAKEGYNVENYYPGDFNVEGIEYLLFPSGIQELDNCTIFFRFQDQLCLSVFSKLQHPSFERSAFFTSVGLILSDDINFGEAVVKYGETLLYIANGLSLATLKYKFGEDASETYASEKCTSHQLSDSDFFKSLQTSAVNLEFDSLFEKLQGNKFAILGANSKELSQSYATILLDHLGPAFYCLYKFALQRKRILLISSHDDQLYSIIDMIVRLSSIKRSSDASIPILLSDLHPFYSVGLANTSTLLDNDLEEGWIACTTDTVLLSKSSLYDLALYWPDNSFNANKYPQIFNSNSIRIKPSYDDLINFKGLSRYLSFDGESSWGLTTYSLASKYIFNTSHHNLTDQEFLNENMLDYFQRYNQKLLTVLSSNAESFNVSDMQTLGLNPCHSLDKSFVSEISQIWLKKHINWQYGKYFWLRRVSLIFLASTCFLFILWKLL.

The uDENN domain maps to 4 to 155; sequence QAIVLATFDA…SAVNLEFDSL (152 aa). In terms of domain architecture, cDENN spans 183–326; sequence LDHLGPAFYC…FKGLSRYLSF (144 aa). The dDENN domain maps to 328-428; it reads GESSWGLTTY…WQYGKYFWLR (101 aa). The helical transmembrane segment at 425 to 447 threads the bilayer; the sequence is FWLRRVSLIFLASTCFLFILWKL.

It localises to the golgi apparatus membrane. The protein resides in the endoplasmic reticulum membrane. This is an uncharacterized protein from Schizosaccharomyces pombe (strain 972 / ATCC 24843) (Fission yeast).